The sequence spans 406 residues: 5-cytosine rRNA methyltransferase NSUN4 (406 aa).

Positions 207, 208, 209, 226, 231, 259, 260, and 277 each coordinate S-adenosyl-L-methionine. Residue C332 is the Nucleophile of the active site.

The protein belongs to the class I-like SAM-binding methyltransferase superfamily. RsmB/NOP family.

It localises to the mitochondrion. The enzyme catalyses a cytidine in rRNA + S-adenosyl-L-methionine = a 5-methylcytidine in rRNA + S-adenosyl-L-homocysteine + H(+). It carries out the reaction a cytidine in mRNA + S-adenosyl-L-methionine = a 5-methylcytidine in mRNA + S-adenosyl-L-homocysteine + H(+). Its function is as follows. Involved in mitochondrial ribosome large subunit biogenesis. In terms of biological role, mitochondrial RNA cytosine C(5)-methyltransferase that methylates cytosine to 5-methylcytosine (m5C) in various RNAs, such as rRNAs, mRNAs and some long non-coding RNAs (lncRNAs). Involved in mitochondrial ribosome small subunit (SSU) maturation by catalyzing methylation of mitochondrial 12S rRNA. The sequence is that of 5-cytosine rRNA methyltransferase NSUN4 (nsun4) from Xenopus tropicalis (Western clawed frog).